The chain runs to 741 residues: Catalase-peroxidase (741 aa).

A signal peptide spans 1–23 (MLKKIITALGMSGMLLASSNAIA). The tryptophyl-tyrosyl-methioninium (Trp-Tyr) (with M-249) cross-link spans 102-223 (WHDAGTYRIY…YAATQMGLIY (122 aa)). His103 acts as the Proton acceptor in catalysis. Residues 223 to 249 (YVNPEGPDGKPDIKGAASEIRQAFRAM) constitute a cross-link (tryptophyl-tyrosyl-methioninium (Tyr-Met) (with W-102)). A heme b-binding site is contributed by His264.

Belongs to the peroxidase family. Peroxidase/catalase subfamily. In terms of assembly, homodimer or homotetramer. Heme b serves as cofactor. In terms of processing, formation of the three residue Trp-Tyr-Met cross-link is important for the catalase, but not the peroxidase activity of the enzyme.

The catalysed reaction is H2O2 + AH2 = A + 2 H2O. It catalyses the reaction 2 H2O2 = O2 + 2 H2O. Its function is as follows. Bifunctional enzyme with both catalase and broad-spectrum peroxidase activity. The chain is Catalase-peroxidase from Francisella tularensis subsp. holarctica (strain FTNF002-00 / FTA).